We begin with the raw amino-acid sequence, 591 residues long: Fanconi anemia group C protein homolog (591 aa).

As to quaternary structure, belongs to the multisubunit FA complex composed of FANCA, FANCB, FANCC, FANCE, FANCF, FANCG, FANCL/PHF9 and FANCM. This complex may also include HSP70. Interacts with ZBTB32. Upon IFNG induction, interacts with STAT1. Interacts with CDK1. Interacts with EIF2AK2. In terms of tissue distribution, ubiquitous.

The protein resides in the nucleus. The protein localises to the cytoplasm. Its function is as follows. DNA repair protein that may operate in a postreplication repair or a cell cycle checkpoint function. May be implicated in interstrand DNA cross-link repair and in the maintenance of normal chromosome stability. Upon IFNG induction, may facilitate STAT1 activation by recruiting STAT1 to IFNGR1. The protein is Fanconi anemia group C protein homolog (Fancc) of Mus musculus (Mouse).